The primary structure comprises 908 residues: 3-phosphoinositide-dependent protein kinase B (908 aa).

Composition is skewed to low complexity over residues 53–170 (NNNF…SSSL), 179–189 (YSDSSDSIDSY), and 200–216 (QQQQ…QPLH). The segment at 53 to 267 (NNNFNNNNNN…PNSSIPHKKS (215 aa)) is disordered. The segment covering 250-262 (KTSSFGLQPNSSI) has biased composition (polar residues). The Protein kinase domain occupies 271-527 (FDFIRTIGKG…ISEIKNHEFF (257 aa)). Residues 281–283 (AYG) and lysine 300 each bind ATP. The tract at residues 302-346 (LNKKLIIKEKKAKYVNTEKTILDSLDNPNIVKLFYTFQDENNLYF) is PIF-pocket. Residues 349-351 (EYC) and aspartate 355 contribute to the ATP site. Aspartate 394 functions as the Proton acceptor in the catalytic mechanism. Glutamate 398 and aspartate 412 together coordinate ATP. Disordered regions lie at residues 538–560 (SQTP…NSSL) and 606–755 (ISNN…KNLQ). The segment covering 607-684 (SNNNNNNNNT…PAYSSTPSST (78 aa)) has biased composition (low complexity). A compositionally biased stretch (polar residues) spans 696 to 709 (SSCSSNNLLGKSSN). Positions 710-741 (QQYQPFQFHQQQQQQQQQQQRERSSTTTPSPT) are enriched in low complexity. Positions 764 to 902 (SSFSTSSPMS…KLWVDLINEL (139 aa)) constitute a PH domain.

Belongs to the protein kinase superfamily. AGC Ser/Thr protein kinase family. PDPK1 subfamily.

It catalyses the reaction L-seryl-[protein] + ATP = O-phospho-L-seryl-[protein] + ADP + H(+). The catalysed reaction is L-threonyl-[protein] + ATP = O-phospho-L-threonyl-[protein] + ADP + H(+). This is 3-phosphoinositide-dependent protein kinase B (pdkB) from Dictyostelium discoideum (Social amoeba).